The chain runs to 711 residues: Ribosomal RNA large subunit methyltransferase K/L (711 aa).

The THUMP domain occupies 43 to 154; the sequence is TLYRTLLWSR…RENLVISLDL (112 aa).

It belongs to the methyltransferase superfamily. RlmKL family.

The protein localises to the cytoplasm. The catalysed reaction is guanosine(2445) in 23S rRNA + S-adenosyl-L-methionine = N(2)-methylguanosine(2445) in 23S rRNA + S-adenosyl-L-homocysteine + H(+). It catalyses the reaction guanosine(2069) in 23S rRNA + S-adenosyl-L-methionine = N(2)-methylguanosine(2069) in 23S rRNA + S-adenosyl-L-homocysteine + H(+). In terms of biological role, specifically methylates the guanine in position 2445 (m2G2445) and the guanine in position 2069 (m7G2069) of 23S rRNA. This is Ribosomal RNA large subunit methyltransferase K/L from Haemophilus influenzae (strain ATCC 51907 / DSM 11121 / KW20 / Rd).